The primary structure comprises 172 residues: Adenylate kinase isoenzyme 6 (172 aa).

ATP is bound by residues Gly-13, Gly-15, Lys-16, Thr-17, and Thr-18. Positions 33 to 56 (NVGDLAREEQLYDGYDEEYDCPIL) are NMP. Positions 33–56 (NVGDLAREEQLYDGYDEEYDCPIL) are NMPbind. The interval 108 to 118 (TRGYNEKKLTD) is LID. Arg-109 and Lys-148 together coordinate ATP.

Belongs to the adenylate kinase family. AK6 subfamily. Monomer and homodimer. Interacts with small ribosomal subunit protein uS11. Not a structural component of 43S pre-ribosomes, but transiently interacts with them by binding to uS11. Interacts with COIL (via C-terminus). As to expression, expressed in heart, brain, placenta, lung, liver, skeletal muscle, kidney, pancreas, chorionic villi and the central nervous system.

Its subcellular location is the cytoplasm. The protein resides in the nucleus. It is found in the nucleoplasm. It localises to the cajal body. The enzyme catalyses AMP + ATP = 2 ADP. The catalysed reaction is ATP + H2O = ADP + phosphate + H(+). Its function is as follows. Broad-specificity nucleoside monophosphate (NMP) kinase that catalyzes the reversible transfer of the terminal phosphate group between nucleoside triphosphates and monophosphates. Also has ATPase activity. Involved in the late cytoplasmic maturation steps of the 40S ribosomal particles, specifically 18S rRNA maturation. While NMP activity is not required for ribosome maturation, ATPase activity is. Associates transiently with small ribosomal subunit protein uS11. ATP hydrolysis breaks the interaction with uS11. May temporarily remove uS11 from the ribosome to enable a conformational change of the ribosomal RNA that is needed for the final maturation step of the small ribosomal subunit. Its NMP activity may have a role in nuclear energy homeostasis. AMP and dAMP are the preferred substrates, but CMP and dCMP are also good substrates. IMP is phosphorylated to a much lesser extent. All nucleoside triphosphates ATP, GTP, UTP, CTP, dATP, dCTP, dGTP, and TTP are accepted as phosphate donors. CTP is the best phosphate donor, followed by UTP, ATP, GTP and dCTP. May be involved in regulation of Cajal body (CB) formation. This chain is Adenylate kinase isoenzyme 6, found in Homo sapiens (Human).